Consider the following 974-residue polypeptide: RING finger protein nhl-1 (974 aa).

The disordered stretch occupies residues 1 to 29; that stretch reads MSSSPQNEAEAREKMRELMSRPPSSRPAD. Over residues 9–19 the composition is skewed to basic and acidic residues; the sequence is AEAREKMRELM. The RING-type zinc-finger motif lies at 43–84; the sequence is CPICLDRYKQPKLLPCQHTFCYPCLESCADTLHRNLKCPECR. 2 disordered regions span residues 360-395 and 416-548; these read VKSD…IRYR and SLLT…DFPV. The span at 416–431 shows a compositional bias: polar residues; sequence SLLTTSVTADSSSRTS. Residues 437–446 are compositionally biased toward basic and acidic residues; the sequence is RVTRSVEPTK. Residues 447 to 465 are compositionally biased toward polar residues; that stretch reads SRPTSLIVPNTETPRTVSP. The span at 488–501 shows a compositional bias: pro residues; the sequence is APLPQLPIRKPPLP. A compositionally biased stretch (basic and acidic residues) spans 511–528; the sequence is LNEKVETIRRAHQQRQDA. Residues 529–538 show a composition bias toward low complexity; sequence SRAASRAVSS. 6 NHL repeats span residues 699–742, 746–788, 792–835, 839–883, 887–930, and 934–974; these read RAVF…FDKD, VRQF…FGLE, LFSF…FDKN, IAKF…FDPH, LFSF…FDAQ, and VSSF…IQIF.

As to quaternary structure, interacts with ubc-13.

In Caenorhabditis elegans, this protein is RING finger protein nhl-1.